A 444-amino-acid polypeptide reads, in one-letter code: Bifunctional protein GlmU (444 aa).

The interval 1 to 226 is pyrophosphorylase; sequence MTDSTHRTTA…EAELAGVNSR (226 aa). UDP-N-acetyl-alpha-D-glucosamine contacts are provided by residues 13–16, Lys-27, Gln-75, and 80–81; these read LAAG and GT. Asp-103 serves as a coordination point for Mg(2+). UDP-N-acetyl-alpha-D-glucosamine contacts are provided by Gly-139, Glu-153, Asn-168, and Asn-224. Asn-224 is a Mg(2+) binding site. A linker region spans residues 227 to 247; that stretch reads SELARAEATLQTRLRNAAMDA. The segment at 248–444 is N-acetyltransferase; it reads GVTLVAPETV…QSLKARKEQG (197 aa). Residues Arg-313 and Lys-331 each coordinate UDP-N-acetyl-alpha-D-glucosamine. His-343 acts as the Proton acceptor in catalysis. Residues Tyr-346 and Asn-357 each contribute to the UDP-N-acetyl-alpha-D-glucosamine site. Acetyl-CoA is bound by residues Ala-360, 366 to 367, Ser-385, Ala-403, and Arg-420; that span reads NY.

In the N-terminal section; belongs to the N-acetylglucosamine-1-phosphate uridyltransferase family. The protein in the C-terminal section; belongs to the transferase hexapeptide repeat family. As to quaternary structure, homotrimer. The cofactor is Mg(2+).

Its subcellular location is the cytoplasm. The enzyme catalyses alpha-D-glucosamine 1-phosphate + acetyl-CoA = N-acetyl-alpha-D-glucosamine 1-phosphate + CoA + H(+). The catalysed reaction is N-acetyl-alpha-D-glucosamine 1-phosphate + UTP + H(+) = UDP-N-acetyl-alpha-D-glucosamine + diphosphate. It functions in the pathway nucleotide-sugar biosynthesis; UDP-N-acetyl-alpha-D-glucosamine biosynthesis; N-acetyl-alpha-D-glucosamine 1-phosphate from alpha-D-glucosamine 6-phosphate (route II): step 2/2. It participates in nucleotide-sugar biosynthesis; UDP-N-acetyl-alpha-D-glucosamine biosynthesis; UDP-N-acetyl-alpha-D-glucosamine from N-acetyl-alpha-D-glucosamine 1-phosphate: step 1/1. Its pathway is bacterial outer membrane biogenesis; LPS lipid A biosynthesis. Catalyzes the last two sequential reactions in the de novo biosynthetic pathway for UDP-N-acetylglucosamine (UDP-GlcNAc). The C-terminal domain catalyzes the transfer of acetyl group from acetyl coenzyme A to glucosamine-1-phosphate (GlcN-1-P) to produce N-acetylglucosamine-1-phosphate (GlcNAc-1-P), which is converted into UDP-GlcNAc by the transfer of uridine 5-monophosphate (from uridine 5-triphosphate), a reaction catalyzed by the N-terminal domain. This chain is Bifunctional protein GlmU, found in Gluconobacter oxydans (strain 621H) (Gluconobacter suboxydans).